Consider the following 553-residue polypeptide: Urocanate hydratase (553 aa).

NAD(+) is bound by residues 45-46 (GG), Q123, 169-171 (GMG), D189, R194, 235-236 (NA), 256-260 (QTSAH), 266-267 (YV), Y315, and G485.

Belongs to the urocanase family. Requires NAD(+) as cofactor.

It localises to the cytoplasm. The catalysed reaction is 4-imidazolone-5-propanoate = trans-urocanate + H2O. Its pathway is amino-acid degradation; L-histidine degradation into L-glutamate; N-formimidoyl-L-glutamate from L-histidine: step 2/3. Functionally, catalyzes the conversion of urocanate to 4-imidazolone-5-propionate. In Staphylococcus aureus (strain Mu50 / ATCC 700699), this protein is Urocanate hydratase.